A 95-amino-acid polypeptide reads, in one-letter code: Large ribosomal subunit protein uL23cz/uL23cy (95 aa).

It belongs to the universal ribosomal protein uL23 family. In terms of assembly, part of the 50S ribosomal subunit.

The protein localises to the plastid. The protein resides in the chloroplast. Binds to 23S rRNA. In Amborella trichopoda, this protein is Large ribosomal subunit protein uL23cz/uL23cy (rpl23-A).